The sequence spans 360 residues: Neutral protease 2 homolog SS1G_13741 (360 aa).

Asn129 carries an N-linked (GlcNAc...) asparagine glycan. Cystine bridges form between Cys189/Cys261 and Cys268/Cys286. His311 contacts Zn(2+). Glu312 is an active-site residue. The Zn(2+) site is built by His315 and Asp326.

The protein belongs to the peptidase M35 family. Zn(2+) is required as a cofactor.

It localises to the secreted. It carries out the reaction Preferential cleavage of bonds with hydrophobic residues in P1'. Also 3-Asn-|-Gln-4 and 8-Gly-|-Ser-9 bonds in insulin B chain.. In terms of biological role, secreted metalloproteinase that allows assimilation of proteinaceous substrates. Shows high activities on basic nuclear substrates such as histone and protamine. The polypeptide is Neutral protease 2 homolog SS1G_13741 (Sclerotinia sclerotiorum (strain ATCC 18683 / 1980 / Ss-1) (White mold)).